A 312-amino-acid chain; its full sequence is Ornithine carbamoyltransferase (312 aa).

Residues 57-60 (STRT), Gln-84, Arg-108, and 135-138 (HPCQ) contribute to the carbamoyl phosphate site. L-ornithine is bound by residues Asn-166, Asp-226, and 230 to 231 (SM). Carbamoyl phosphate is bound by residues 265-266 (CL) and Arg-293.

The protein belongs to the aspartate/ornithine carbamoyltransferase superfamily. OTCase family.

Its subcellular location is the cytoplasm. It catalyses the reaction carbamoyl phosphate + L-ornithine = L-citrulline + phosphate + H(+). The protein operates within amino-acid biosynthesis; L-arginine biosynthesis; L-arginine from L-ornithine and carbamoyl phosphate: step 1/3. Functionally, reversibly catalyzes the transfer of the carbamoyl group from carbamoyl phosphate (CP) to the N(epsilon) atom of ornithine (ORN) to produce L-citrulline. The polypeptide is Ornithine carbamoyltransferase (Brucella ovis (strain ATCC 25840 / 63/290 / NCTC 10512)).